The chain runs to 687 residues: Polyphosphate kinase (687 aa).

N45 is a binding site for ATP. Mg(2+)-binding residues include R375 and R405. The Phosphohistidine intermediate role is filled by H435. Residues Y472, R568, and H596 each coordinate ATP.

Belongs to the polyphosphate kinase 1 (PPK1) family. The cofactor is Mg(2+). Post-translationally, an intermediate of this reaction is the autophosphorylated ppk in which a phosphate is covalently linked to a histidine residue through a N-P bond.

The enzyme catalyses [phosphate](n) + ATP = [phosphate](n+1) + ADP. Catalyzes the reversible transfer of the terminal phosphate of ATP to form a long-chain polyphosphate (polyP). The sequence is that of Polyphosphate kinase from Paraburkholderia phytofirmans (strain DSM 17436 / LMG 22146 / PsJN) (Burkholderia phytofirmans).